The chain runs to 381 residues: CD2 homolog (381 aa).

The N-terminal stretch at 1–16 (MIIKLIFLICFKIVLS) is a signal peptide. Residues 17 to 208 (INYWVRYNDT…QNYFLENIHT (192 aa)) lie on the Extracellular side of the membrane. Residues Asn-24, Asn-73, Asn-77, Asn-85, Asn-91, Asn-104, Asn-121, Asn-133, Asn-144, Asn-176, Asn-183, and Asn-189 are each glycosylated (N-linked (GlcNAc...) asparagine; by host). 2 disulfides stabilise this stretch: Cys-122/Cys-190 and Cys-129/Cys-173. A helical membrane pass occupies residues 209-229 (LFYMIIFIVSGITISIFISII). Residues 230–381 (TFLSLRKRKK…ISLIHVDRII (152 aa)) are Cytoplasmic-facing. A disordered region spans residues 243–278 (EIESPPPESNEEEQCQHDDTTSIHEPSPREPLLPKP). A compositionally biased stretch (basic and acidic residues) spans 256-270 (QCQHDDTTSIHEPSP). 7 repeat units span residues 305–310 (KPCPPP), 311–316 (KPCPPP), 317–322 (KPCPPP), 323–328 (KPCPPP), 329–334 (KPCPPP), 335–340 (KPCPPP), and 341–346 (KPCPPP). Positions 305–334 (KPCPPPKPCPPPKPCPPPKPCPPPKPCPPP) are 7 X 6 AA tandem repeats of K-[LP]-C-[PRS]-[PS]-[PS]. The interval 341 to 362 (KPCPPPESYSPPKPLPSIPLLP) is disordered.

This sequence belongs to the asfivirus CD2 homolog protein family. As to quaternary structure, both glycosylated and nonglycosylated forms interact (via C-terminus) with the host AP-1 complex. In terms of processing, cleaved into two fragments of 63 kDa and 26 kDa containing respectively the glycosylated N-terminus and the nonglycosylated C-terminus. A full-length 89-kDa glycosylated form also exists.

The protein resides in the host membrane. The protein localises to the virion membrane. Its subcellular location is the host Golgi apparatus. May play an immunosuppressive role by inhibiting lymphocyte proliferation and subsequently facilitating viral replication and generalization of infection. Responsible for viral hemadsorption, which may help viral spread. Increases virus replication in the tick vector at the step of virus uptake or replication in the tick gut. May play a role in the host Golgi reorganization to yield viral factories. May play a role in host cell penetration. The protein is CD2 homolog of African swine fever virus (isolate Warthog/Namibia/Wart80/1980) (ASFV).